The sequence spans 283 residues: Shikimate dehydrogenase (NADP(+)) (283 aa).

Shikimate-binding positions include 16 to 18 (SLS) and Thr63. Lys67 acts as the Proton acceptor in catalysis. Position 79 (Asp79) interacts with NADP(+). Residues Asn88 and Asp103 each contribute to the shikimate site. Residues 128–132 (GAGGA), Ala223, and Gly243 contribute to the NADP(+) site.

This sequence belongs to the shikimate dehydrogenase family. In terms of assembly, homodimer.

It carries out the reaction shikimate + NADP(+) = 3-dehydroshikimate + NADPH + H(+). It functions in the pathway metabolic intermediate biosynthesis; chorismate biosynthesis; chorismate from D-erythrose 4-phosphate and phosphoenolpyruvate: step 4/7. Functionally, involved in the biosynthesis of the chorismate, which leads to the biosynthesis of aromatic amino acids. Catalyzes the reversible NADPH linked reduction of 3-dehydroshikimate (DHSA) to yield shikimate (SA). The chain is Shikimate dehydrogenase (NADP(+)) from Xanthomonas campestris pv. campestris (strain B100).